A 57-amino-acid polypeptide reads, in one-letter code: Temporin-ALk (57 aa).

The first 22 residues, 1-22, serve as a signal peptide directing secretion; sequence MFTLKKSLLLLFFLGTINLSLC. Residues 23-46 constitute a propeptide that is removed on maturation; sequence EQERNAEEERRDDLGERQAEVEKR. Ser-56 is modified (serine amide).

The protein belongs to the frog skin active peptide (FSAP) family. Temporin subfamily. As to expression, expressed by the skin glands.

Its subcellular location is the secreted. Antimicrobial peptide with weak activity against Gram-positive and Gram-negative bacteria and against fungi. Has been tested against S.aureus (MIC=15.0 ug/mL), B.pumilus (no activity detected), B.cereus (no activity detected), E.coli (MIC=30.0 ug/mL), B.dysenteriae (MIC=60.0 ug/mL), A.cacoaceticus (MIC=75.0 ug/mL), P.aeruginosa (MIC=25.0 ug/mL) and C.albicans (MIC=15.0 ug/mL). Also shows a weak hemolytic activity. The chain is Temporin-ALk from Amolops loloensis (Lolokou Sucker Frog).